The chain runs to 98 residues: Small ribosomal subunit protein eS24 (98 aa).

Belongs to the eukaryotic ribosomal protein eS24 family.

This is Small ribosomal subunit protein eS24 (rps2e) from Thermoplasma acidophilum (strain ATCC 25905 / DSM 1728 / JCM 9062 / NBRC 15155 / AMRC-C165).